We begin with the raw amino-acid sequence, 318 residues long: MDTSEPLEEGDRTHEQRPHTRSNPEGAEDREGLPQAGVGSRSEGEGEAAQVDDPLPTTTAVPTNCTPPPTLEFQLKTPRVNCPEKVIICLDLSEEMSTQKLESFNGSKANALNSSQKMIEMFVRTKHKIDKRHEFALVVANNEAMWLSGFTSDPREVCSCLYDLETNVCESFNLEGLFNLIQQRTEFPVTDNVQTIPPPYVVRIILIYSRPASQPALNLTDNMKKMLQCPYFFFDVIYIHNGSEEEELRWKDIFSFFSGLDSKGTSYKYEVSITGPALELHNCMARLLAHPLQRPFQSHAAYSLLEEEEESPESEVTV.

The interval 1 to 67 is disordered; that stretch reads MDTSEPLEEG…TTAVPTNCTP (67 aa). The span at 9-18 shows a compositional bias: basic and acidic residues; sequence EGDRTHEQRP. Residues 86–287 form a VWFA-like region; sequence VIICLDLSEE…LELHNCMARL (202 aa).

It belongs to the BABAM1 family. As to quaternary structure, component of the ARISC complex, at least composed of uimc1/rap80, abraxas1, brcc3/brcc36, BABAM2 and babam1/nba1. Component of the BRCA1-A complex, at least composed of brca1, bard1, uimc1/rap80, abraxas1, brcc3/brcc36, BABAM2 and babam1/nba1. In the BRCA1-A complex, interacts directly with abraxas1 and BABAM2. Component of the BRISC complex, at least composed of abraxas2, brcc3/brcc36, babam2 and babam1/nba1.

It localises to the cytoplasm. Its subcellular location is the nucleus. Functionally, component of the BRCA1-A complex, a complex that specifically recognizes 'Lys-63'-linked ubiquitinated histones H2A and H2AX at DNA lesions sites, leading to target the BRCA1-BARD1 heterodimer to sites of DNA damage at double-strand breaks (DSBs). The BRCA1-A complex also possesses deubiquitinase activity that specifically removes 'Lys-63'-linked ubiquitin on histones H2A and H2AX. In the BRCA1-A complex, it is required for the complex integrity and its localization at DSBs. Component of the BRISC complex, a multiprotein complex that specifically cleaves 'Lys-63'-linked ubiquitin in various substrates. In these 2 complexes, it is probably required to maintain the stability of BABAM2 and help the 'Lys-63'-linked deubiquitinase activity mediated by brcc3/brcc36 component. The BRISC complex is required for normal mitotic spindle assembly and microtubule attachment to kinetochores via its role in deubiquitinating numa1. Plays a role in interferon signaling via its role in the deubiquitination of the interferon receptor ifnar1; deubiquitination increases ifnar1 activity by enhancing its stability and cell surface expression. Down-regulates the response to bacterial lipopolysaccharide (LPS) via its role in ifnar1 deubiquitination. This Xenopus tropicalis (Western clawed frog) protein is BRISC and BRCA1-A complex member 1 (babam1).